The following is a 424-amino-acid chain: UPF0229 protein ECA2349 (424 aa).

The interval 53 to 111 (SIPNADINEPMFHQGRGGHRHRVHPGNDHFVQNDKIERPQGGGGSGSGQGDASKDGEGD) is disordered. Over residues 77–90 (PGNDHFVQNDKIER) the composition is skewed to basic and acidic residues. Positions 92-101 (QGGGGSGSGQ) are enriched in gly residues.

Belongs to the UPF0229 family.

The protein is UPF0229 protein ECA2349 of Pectobacterium atrosepticum (strain SCRI 1043 / ATCC BAA-672) (Erwinia carotovora subsp. atroseptica).